Consider the following 325-residue polypeptide: GTP 3',8-cyclase (325 aa).

Residues 4–219 (NYNRNINYLR…HGLQQKFGLL (216 aa)) form the Radical SAM core domain. Arginine 13 is a GTP binding site. Residues cysteine 20 and cysteine 24 each contribute to the [4Fe-4S] cluster site. An S-adenosyl-L-methionine-binding site is contributed by tyrosine 26. Residue cysteine 27 participates in [4Fe-4S] cluster binding. GTP is bound at residue arginine 63. Residue glycine 67 coordinates S-adenosyl-L-methionine. A GTP-binding site is contributed by threonine 94. An S-adenosyl-L-methionine-binding site is contributed by serine 118. A GTP-binding site is contributed by lysine 155. Methionine 189 is an S-adenosyl-L-methionine binding site. The [4Fe-4S] cluster site is built by cysteine 254 and cysteine 257. Residue 259-261 (RLR) participates in GTP binding. Cysteine 271 serves as a coordination point for [4Fe-4S] cluster.

It belongs to the radical SAM superfamily. MoaA family. As to quaternary structure, monomer and homodimer. [4Fe-4S] cluster serves as cofactor.

It catalyses the reaction GTP + AH2 + S-adenosyl-L-methionine = (8S)-3',8-cyclo-7,8-dihydroguanosine 5'-triphosphate + 5'-deoxyadenosine + L-methionine + A + H(+). The protein operates within cofactor biosynthesis; molybdopterin biosynthesis. Functionally, catalyzes the cyclization of GTP to (8S)-3',8-cyclo-7,8-dihydroguanosine 5'-triphosphate. The sequence is that of GTP 3',8-cyclase from Desulforamulus reducens (strain ATCC BAA-1160 / DSM 100696 / MI-1) (Desulfotomaculum reducens).